Here is a 692-residue protein sequence, read N- to C-terminus: Potassium-transporting ATPase ATP-binding subunit (692 aa).

A run of 4 helical transmembrane segments spans residues 50–70 (PIMF…FLPS), 77–97 (GWFN…ANFA), 240–260 (LTLI…YLGF), and 266–286 (VLVA…LSAI). The 4-aspartylphosphate intermediate role is filled by Asp319. Residues Asp356, Glu360, 388–395 (FKAETRMS), and Lys407 contribute to the ATP site. Positions 530 and 534 each coordinate Mg(2+). A run of 3 helical transmembrane segments spans residues 600–620 (FAII…LNIM), 628–648 (AILS…PLAM), and 672–692 (GGVI…GLFI).

It belongs to the cation transport ATPase (P-type) (TC 3.A.3) family. Type IA subfamily. The system is composed of three essential subunits: KdpA, KdpB and KdpC.

It is found in the cell membrane. The enzyme catalyses K(+)(out) + ATP + H2O = K(+)(in) + ADP + phosphate + H(+). In terms of biological role, part of the high-affinity ATP-driven potassium transport (or Kdp) system, which catalyzes the hydrolysis of ATP coupled with the electrogenic transport of potassium into the cytoplasm. This subunit is responsible for energy coupling to the transport system and for the release of the potassium ions to the cytoplasm. The chain is Potassium-transporting ATPase ATP-binding subunit from Bacillus cereus (strain 03BB102).